Reading from the N-terminus, the 1561-residue chain is Sterile alpha motif domain-containing protein 9-like (1561 aa).

An SAM domain is found at 14–79 (WTKEHVRKWV…RMYNKLISSP (66 aa)). The segment at 78 to 157 (SPESHNQDSR…DNKPKPEQMS (80 aa)) is disordered. Basic and acidic residues-rich tracts occupy residues 82 to 107 (HNQDSRELNDKKLSTKEQQTKTKNEE) and 142 to 153 (VTKDMEDNKPKP).

In terms of assembly, interacts with EEA1.

The protein localises to the early endosome. It is found in the mitochondrion. Functionally, may be involved in endosome fusion. Mediates down-regulation of growth factor signaling via internalization of growth factor receptors. The protein is Sterile alpha motif domain-containing protein 9-like (Samd9l) of Mus musculus (Mouse).